The following is a 158-amino-acid chain: Phosphopantetheine adenylyltransferase (158 aa).

Thr10 is a substrate binding site. Residues 10–11 (TF) and His18 each bind ATP. Substrate is bound by residues Lys42, Leu74, and Arg88. ATP contacts are provided by residues 89 to 91 (GIR), Glu99, and 124 to 130 (WRYLSST).

It belongs to the bacterial CoaD family. As to quaternary structure, homohexamer. Mg(2+) serves as cofactor.

It localises to the cytoplasm. The enzyme catalyses (R)-4'-phosphopantetheine + ATP + H(+) = 3'-dephospho-CoA + diphosphate. It functions in the pathway cofactor biosynthesis; coenzyme A biosynthesis; CoA from (R)-pantothenate: step 4/5. Reversibly transfers an adenylyl group from ATP to 4'-phosphopantetheine, yielding dephospho-CoA (dPCoA) and pyrophosphate. This Actinobacillus pleuropneumoniae serotype 3 (strain JL03) protein is Phosphopantetheine adenylyltransferase.